A 404-amino-acid chain; its full sequence is Histidinol dehydrogenase (404 aa).

3 residues coordinate NAD(+): Y114, Q176, and N199. Residues S222, Q244, and H247 each contribute to the substrate site. Zn(2+) is bound by residues Q244 and H247. Active-site proton acceptor residues include E300 and H301. Substrate contacts are provided by H301, D334, E388, and H393. D334 provides a ligand contact to Zn(2+). H393 is a binding site for Zn(2+).

Belongs to the histidinol dehydrogenase family. Requires Zn(2+) as cofactor.

It carries out the reaction L-histidinol + 2 NAD(+) + H2O = L-histidine + 2 NADH + 3 H(+). The protein operates within amino-acid biosynthesis; L-histidine biosynthesis; L-histidine from 5-phospho-alpha-D-ribose 1-diphosphate: step 9/9. In terms of biological role, catalyzes the sequential NAD-dependent oxidations of L-histidinol to L-histidinaldehyde and then to L-histidine. This chain is Histidinol dehydrogenase (hisD), found in Archaeoglobus fulgidus (strain ATCC 49558 / DSM 4304 / JCM 9628 / NBRC 100126 / VC-16).